Here is a 1088-residue protein sequence, read N- to C-terminus: RNA-directed RNA polymerase (1088 aa).

The RdRp catalytic domain occupies 501–687 (LSYGDVTRFL…AKRYIAGGKI (187 aa)).

It belongs to the reoviridae RNA-directed RNA polymerase family. In terms of assembly, interacts with VP3 (Potential). Interacts with VP2; this interaction activates VP1. Interacts with NSP5; this interaction is probably necessary for the formation of functional virus factories. Interacts with NSP2; this interaction is weak. Mg(2+) is required as a cofactor.

It is found in the virion. The enzyme catalyses RNA(n) + a ribonucleoside 5'-triphosphate = RNA(n+1) + diphosphate. Its function is as follows. RNA-directed RNA polymerase that is involved in both transcription and genome replication. Together with VP3 capping enzyme, forms an enzyme complex positioned near the channels situated at each of the five-fold vertices of the core. Following infection, the outermost layer of the virus is lost, leaving a double-layered particle (DLP) made up of the core and VP6 shell. VP1 then catalyzes the transcription of fully conservative plus-strand genomic RNAs that are extruded through the DLP's channels into the cytoplasm where they function as mRNAs for translation of viral proteins. One copy of each of the viral (+)RNAs is also recruited during core assembly, together with newly synthesized polymerase complexes and VP2. The polymerase of these novo-formed particles catalyzes the synthesis of complementary minus-strands leading to dsRNA formation. To do so, the polymerase specifically recognizes and binds 4 bases 5'-UGUG-3' in the conserved 3'-sequence of plus-strand RNA templates. VP2 presumably activates the autoinhibited VP1-RNA complex to coordinate packaging and genome replication. Once dsRNA synthesis is complete, the polymerase switches to the transcriptional mode, thus providing secondary transcription. The protein is RNA-directed RNA polymerase of Macaca mulatta (Rhesus macaque).